A 625-amino-acid polypeptide reads, in one-letter code: Chaperone protein DnaK (625 aa).

The residue at position 197 (T197) is a Phosphothreonine; by autocatalysis. The segment at 598-625 (AYAKEQGGTQQGTDTKKKDDDVIDAEVE) is disordered.

This sequence belongs to the heat shock protein 70 family.

Functionally, acts as a chaperone. In Helicobacter hepaticus (strain ATCC 51449 / 3B1), this protein is Chaperone protein DnaK.